The following is a 927-amino-acid chain: Protein translocase subunit SecA (927 aa).

ATP-binding positions include glutamine 86, 104-108 (GEGKT), and aspartate 494. Residues 853–927 (YTAPDEDGTP…GSKAKRGKRR (75 aa)) are disordered. The segment covering 860-879 (GTPHAEVEAVDPGARERTSE) has biased composition (basic and acidic residues). Positions 907–927 (RAKRRGASARSGSKAKRGKRR) are enriched in basic residues.

The protein belongs to the SecA family. Monomer and homodimer. Part of the essential Sec protein translocation apparatus which comprises SecA, SecYEG and auxiliary proteins SecDF. Other proteins may also be involved.

It is found in the cell membrane. Its subcellular location is the cytoplasm. The catalysed reaction is ATP + H2O + cellular proteinSide 1 = ADP + phosphate + cellular proteinSide 2.. Its function is as follows. Part of the Sec protein translocase complex. Interacts with the SecYEG preprotein conducting channel. Has a central role in coupling the hydrolysis of ATP to the transfer of proteins into and across the cell membrane, serving as an ATP-driven molecular motor driving the stepwise translocation of polypeptide chains across the membrane. The protein is Protein translocase subunit SecA of Kocuria rhizophila (strain ATCC 9341 / DSM 348 / NBRC 103217 / DC2201).